The primary structure comprises 439 residues: Glutamate-1-semialdehyde 2,1-aminomutase (439 aa).

Lys-270 is subject to N6-(pyridoxal phosphate)lysine.

The protein belongs to the class-III pyridoxal-phosphate-dependent aminotransferase family. HemL subfamily. As to quaternary structure, homodimer. Pyridoxal 5'-phosphate serves as cofactor.

It is found in the cytoplasm. The catalysed reaction is (S)-4-amino-5-oxopentanoate = 5-aminolevulinate. Its pathway is porphyrin-containing compound metabolism; protoporphyrin-IX biosynthesis; 5-aminolevulinate from L-glutamyl-tRNA(Glu): step 2/2. The sequence is that of Glutamate-1-semialdehyde 2,1-aminomutase from Kocuria rhizophila (strain ATCC 9341 / DSM 348 / NBRC 103217 / DC2201).